Reading from the N-terminus, the 80-residue chain is Defensin-like protein 17 (80 aa).

Positions 1–29 (MAKSATIITFLFAALVLFAAFEAPTMVEA) are cleaved as a signal peptide. A Pyrrolidone carboxylic acid modification is found at Gln-30. 4 cysteine pairs are disulfide-bonded: Cys-33–Cys-80, Cys-44–Cys-65, Cys-50–Cys-74, and Cys-54–Cys-76.

The protein belongs to the DEFL family.

Its subcellular location is the secreted. In terms of biological role, confers broad-spectrum resistance to pathogens. The polypeptide is Defensin-like protein 17 (PDF1.2C) (Arabidopsis thaliana (Mouse-ear cress)).